The following is a 909-amino-acid chain: MSSGDAPPQAQPQPHQQEQPNQRQSSTPAPSAAPVPPAPSTSTSNSAGGVSFRRQRASRACETCHARKVRCDAASLGVPCTNCVAFQIECRIPNPKRKKTQGTGGSQTNKDSDSDRGDGTEDPSPRPVAPTAASFAPRTPSVFHSHNGTPPTTLTEAQARKEEVDSGTYLDLVMKPKFTRAPITEAGRVAYLGESSNLTLLVHDRQGSADVVHYPLPENVRGSRARLTELDNVEIDILHQRGAFLLPPRALCDELIDAYFSWVHPIVPVINRTRFMRQYRDPKNPPSLLLLQSVLLAGTRACNNAQLMDANGSTTPAALTFYKRAKALYDANYEDDRVTIVQSLLLMGWYWEGPEDVTKNVFYWSRVATIVAQGSGMHRSVEQSQLSRSDKRLWKRIWWTLFTRDRSVAVALGRPVHINLDDADVEMLTEDDFIEDEQDRVSEYPPDPIHVQFFLEYVKLCEIMGLVLSQQYSVASKGRQRNAIDLTHSDMALADWLQNCPKIVYWEVPRHHFWSALLHSNYYTTLCLLHRAHMPPGGSARFPDPSPYPSRNIAFQAAAMITSIVENLAAHDQLRYCPAFVVYSLFSALIRHVYQMRSPVPSIQQVTQDRLRSCMSAMKEISRVWLVGKMVYALFESIIGNKVLEERLQKAEGKRHRKMRQTLTTQLEQHSRQQEAPKRKYDEMAIDFGTNTPQPQESYERSRPQTPSAVKAETSSMQPPPVSSPGARQSAADTFMGGTNSRPQTRPATPFNPSFSVPPTPPDLYLVTRNSPNLSQSLWENFQPDQLFPDSAAMPAFPNLSPIQTHASLDHSAMGPVPGNGQGGMPNQQAGQFQQRGNGILPQGFQGHTNMWQPNLDPNLPEGQSPDSWSSTSGQGQAVPTTLNVEDWFQFFGINGTDPNHLNLDIPLG.

A disordered region spans residues 1–51 (MSSGDAPPQAQPQPHQQEQPNQRQSSTPAPSAAPVPPAPSTSTSNSAGGVS). Low complexity predominate over residues 12 to 30 (PQPHQQEQPNQRQSSTPAP). Positions 61–90 (CETCHARKVRCDAASLGVPCTNCVAFQIEC) form a DNA-binding region, zn(2)-C6 fungal-type. 3 disordered regions span residues 95-159 (PKRK…EAQA), 651-757 (AEGK…SFSV), and 841-878 (LPQGFQGHTNMWQPNLDPNLPEGQSPDSWSSTSGQGQA). Over residues 110–119 (KDSDSDRGDG) the composition is skewed to basic and acidic residues. The segment covering 142 to 156 (VFHSHNGTPPTTLTE) has biased composition (polar residues). Over residues 669-683 (QHSRQQEAPKRKYDE) the composition is skewed to basic and acidic residues. Polar residues-rich tracts occupy residues 704-717 (PQTPSAVKAETSSM), 737-755 (GGTNSRPQTRPATPFNPSF), and 865-878 (SPDSWSSTSGQGQA).

The protein localises to the nucleus. This is Cutinase transcription factor 1 alpha (CTF1-ALPHA) from Fusarium vanettenii (Neocosmospora pisi).